A 657-amino-acid chain; its full sequence is Serine/threonine-protein kinase BUR1 (657 aa).

In terms of domain architecture, Protein kinase spans 60–366 (YREDEKLGQG…AMSAKHHPWF (307 aa)). Residues 66–74 (LGQGTFGEV) and lysine 89 contribute to the ATP site. The Proton acceptor role is filled by aspartate 195. At threonine 240 the chain carries Phosphothreonine; by CAK. Residue serine 400 is modified to Phosphoserine. At threonine 405 the chain carries Phosphothreonine. The disordered stretch occupies residues 414–657 (KGESPVVKNL…FQNSDIADLY (244 aa)). Phosphoserine is present on serine 417. The segment covering 489–501 (NNSSRNNRFSGNS) has biased composition (low complexity). Polar residues-rich tracts occupy residues 535-552 (SRYQ…SPND), 564-595 (PETN…NGSR), and 614-625 (ISPSQGQHQLTS). The segment covering 627-649 (PIEKKNGSFKDERAKPDESKEFQ) has biased composition (basic and acidic residues). Serine 634 is subject to Phosphoserine.

Belongs to the protein kinase superfamily. CMGC Ser/Thr protein kinase family. CDC2/CDKX subfamily. As to quaternary structure, belongs to the BUR kinase complex composed of SGV1/BUR1 and BUR2. Interacts with BUR2 and RBP1.

It is found in the nucleus. It carries out the reaction L-seryl-[protein] + ATP = O-phospho-L-seryl-[protein] + ADP + H(+). It catalyses the reaction L-threonyl-[protein] + ATP = O-phospho-L-threonyl-[protein] + ADP + H(+). The catalysed reaction is [DNA-directed RNA polymerase] + ATP = phospho-[DNA-directed RNA polymerase] + ADP + H(+). Serine/threonine-protein kinase component of the BUR kinase complex involved in transcription regulation. This complex phosphorylates 'Ser-120' of the UBC2/RAD6 ubiquitin-conjugating enzyme (E2), leading to monoubiquitination of histone H2B, the localization of the PAF1 complex to the chromatin, and the silencing of telomeric-associated genes. Also required for histone H3 'Lys-4' trimethylation. May phosphorylate the 'Ser-5' of the RBP1 carboxy-terminal domain (CTD) repeats. Necessary for the recovery from pheromone-induced growth arrest in the cell cycle G1 phase. The kinase activity of the complex requires the presence of BUR2. The protein is Serine/threonine-protein kinase BUR1 (SGV1) of Saccharomyces cerevisiae (strain ATCC 204508 / S288c) (Baker's yeast).